Reading from the N-terminus, the 247-residue chain is uncharacterized protein (247 aa).

Positions 200 to 225 (SGKYSELKTKVNDIENDLRTLSSNTN) form a coiled coil.

This is an uncharacterized protein from Acanthamoeba polyphaga (Amoeba).